The sequence spans 40 residues: RNA replication protein (40 aa).

The protein belongs to the potexviruses/carlaviruses RNA replication protein family.

The enzyme catalyses RNA(n) + a ribonucleoside 5'-triphosphate = RNA(n+1) + diphosphate. It catalyses the reaction ATP + H2O = ADP + phosphate + H(+). Its function is as follows. RNA replication. The central part of this protein possibly functions as an ATP-binding helicase. The polypeptide is RNA replication protein (Lily symptomless virus (LSV)).